A 371-amino-acid chain; its full sequence is Macronuclear solute carrier homolog CR-MSC (371 aa).

Solcar repeat units follow at residues 16–111 (RMNY…FYDK), 120–208 (ARPD…CKEN), and 215–304 (PHWI…LSQF). The next 6 helical transmembrane spans lie at 22–42 (FAAANVIALITHAATQPLDMV), 89–109 (TFFFRTVCYTTARVTAFGYFY), 126–146 (VAAGVLGGFIAGVVTNPIDIV), 184–204 (AGANGFKLAAICSSMTNIYDW), 221–241 (LWGTAVAVAIGTVVSMPFDMI), and 281–301 (FGSFYAGGEAYFLRLFLICYL).

It belongs to the mitochondrial carrier (TC 2.A.29) family.

The protein resides in the membrane. This chain is Macronuclear solute carrier homolog CR-MSC, found in Oxytricha fallax.